The primary structure comprises 122 residues: MFTKKNYKRVIYNIVGYLGEILIIWFLKCKGYYIIKHRYKCILGEIDIIACKNKYLAFIEVKTSIFGSEIPITNKQQRSIIKAAKSFITYHTKFEEYNIRFDLYFFSLSKGLIHIPHAWQEF.

This sequence belongs to the UPF0102 family.

This is UPF0102 protein ECH_0093 from Ehrlichia chaffeensis (strain ATCC CRL-10679 / Arkansas).